A 376-amino-acid chain; its full sequence is Queuine tRNA-ribosyltransferase (376 aa).

Asp-89 serves as the catalytic Proton acceptor. Substrate-binding positions include Asp-89–Phe-93, Asp-143, Gln-194, and Gly-221. Residues Gly-252–Asn-258 are RNA binding. The active-site Nucleophile is Asp-271. Positions Ala-276–Arg-280 are RNA binding; important for wobble base 34 recognition. Residues Cys-309, Cys-311, Cys-314, and His-340 each coordinate Zn(2+).

Belongs to the queuine tRNA-ribosyltransferase family. In terms of assembly, homodimer. Within each dimer, one monomer is responsible for RNA recognition and catalysis, while the other monomer binds to the replacement base PreQ1. Requires Zn(2+) as cofactor.

The catalysed reaction is 7-aminomethyl-7-carbaguanine + guanosine(34) in tRNA = 7-aminomethyl-7-carbaguanosine(34) in tRNA + guanine. It participates in tRNA modification; tRNA-queuosine biosynthesis. Functionally, catalyzes the base-exchange of a guanine (G) residue with the queuine precursor 7-aminomethyl-7-deazaguanine (PreQ1) at position 34 (anticodon wobble position) in tRNAs with GU(N) anticodons (tRNA-Asp, -Asn, -His and -Tyr). Catalysis occurs through a double-displacement mechanism. The nucleophile active site attacks the C1' of nucleotide 34 to detach the guanine base from the RNA, forming a covalent enzyme-RNA intermediate. The proton acceptor active site deprotonates the incoming PreQ1, allowing a nucleophilic attack on the C1' of the ribose to form the product. After dissociation, two additional enzymatic reactions on the tRNA convert PreQ1 to queuine (Q), resulting in the hypermodified nucleoside queuosine (7-(((4,5-cis-dihydroxy-2-cyclopenten-1-yl)amino)methyl)-7-deazaguanosine). This is Queuine tRNA-ribosyltransferase from Clostridium tetani (strain Massachusetts / E88).